A 333-amino-acid polypeptide reads, in one-letter code: Sphingomyelinase C (333 aa).

The first 27 residues, 1-27, serve as a signal peptide directing secretion; the sequence is MKGKLLKGVLSFGIGLGVLYGGSSVQA. Cysteine 150 and cysteine 186 form a disulfide bridge.

Belongs to the neutral sphingomyelinase family. Mg(2+) serves as cofactor.

It localises to the secreted. The catalysed reaction is a sphingomyelin + H2O = phosphocholine + an N-acylsphing-4-enine + H(+). With respect to regulation, activated by cobalt and manganese ions. In terms of biological role, required, with sphingomyelinase, to effect target cell lysis (hemolysis). This chain is Sphingomyelinase C (sph), found in Bacillus cereus.